The following is a 25-amino-acid chain: Dermaseptin-5.1TR (25 aa).

The residue at position 25 (V25) is a Valine amide.

Expressed by the skin glands.

It localises to the secreted. Functionally, has antimicrobial activity. In Phyllomedusa trinitatis (Trinidad leaf frog), this protein is Dermaseptin-5.1TR.